Reading from the N-terminus, the 370-residue chain is D-alanine--D-alanine ligase (370 aa).

Residues 144–352 (KKIFADAGIP…YGALIERLVD (209 aa)) form the ATP-grasp domain. Residue 177–232 (EEVLTYPVFVKPANLGSSVGISKATNKKELVDAMTEAFLYDRRVVVEQGVVAREIE) coordinates ATP. Mg(2+)-binding residues include Asp-306, Glu-319, and Asn-321.

It belongs to the D-alanine--D-alanine ligase family. The cofactor is Mg(2+). Mn(2+) is required as a cofactor.

The protein resides in the cytoplasm. The enzyme catalyses 2 D-alanine + ATP = D-alanyl-D-alanine + ADP + phosphate + H(+). It functions in the pathway cell wall biogenesis; peptidoglycan biosynthesis. Its function is as follows. Cell wall formation. In Listeria monocytogenes serovar 1/2a (strain ATCC BAA-679 / EGD-e), this protein is D-alanine--D-alanine ligase.